Consider the following 343-residue polypeptide: Aspartate carbamoyltransferase catalytic subunit (343 aa).

Residues Arg-54 and Thr-55 each coordinate carbamoyl phosphate. Lys-82 lines the L-aspartate pocket. Arg-104, His-134, and Gln-137 together coordinate carbamoyl phosphate. L-aspartate is bound by residues Arg-177 and Arg-232. Carbamoyl phosphate-binding residues include Gly-277 and Pro-278. Residues 323–343 (PDQSNPQRNVTNTSNWQETKR) form a disordered region.

It belongs to the aspartate/ornithine carbamoyltransferase superfamily. ATCase family. As to quaternary structure, heterododecamer (2C3:3R2) of six catalytic PyrB chains organized as two trimers (C3), and six regulatory PyrI chains organized as three dimers (R2).

The catalysed reaction is carbamoyl phosphate + L-aspartate = N-carbamoyl-L-aspartate + phosphate + H(+). Its pathway is pyrimidine metabolism; UMP biosynthesis via de novo pathway; (S)-dihydroorotate from bicarbonate: step 2/3. Its function is as follows. Catalyzes the condensation of carbamoyl phosphate and aspartate to form carbamoyl aspartate and inorganic phosphate, the committed step in the de novo pyrimidine nucleotide biosynthesis pathway. The sequence is that of Aspartate carbamoyltransferase catalytic subunit from Renibacterium salmoninarum (strain ATCC 33209 / DSM 20767 / JCM 11484 / NBRC 15589 / NCIMB 2235).